The sequence spans 287 residues: uncharacterized protein (287 aa).

This is an uncharacterized protein from Acanthamoeba polyphaga mimivirus (APMV).